Here is a 611-residue protein sequence, read N- to C-terminus: Protein halfway (611 aa).

The first 22 residues, 1–22, serve as a signal peptide directing secretion; that stretch reads MLAYTHGTWLLLLLLLVAGACA. 3 disordered regions span residues 31 to 64, 90 to 132, and 154 to 185; these read DPAA…LKED, SLAE…AAPE, and GRAE…CQCR. Over residues 43–59 the composition is skewed to basic residues; the sequence is AHAHPQARHHHHAHPHA. Residues 90 to 101 show a composition bias toward polar residues; the sequence is SLAETQSMSDPG. The span at 102–123 shows a compositional bias: low complexity; sequence SVTDTTSTSTSHSTSTTSTTSP. Over residues 159–183 the composition is skewed to polar residues; the sequence is SEGQGSTVAQSEAQNRGGQGNSQCQ. N-linked (GlcNAc...) asparagine glycosylation is found at Asn-221, Asn-246, Asn-264, and Asn-269. LRR repeat units follow at residues 236–257, 259–280, 283–304, and 313–334; these read SLQS…FPRL, ALKC…AVKD, HLEF…NQNK, and NMRM…NFLN. The region spanning 361–416 is the LRRNT domain; that stretch reads ENRKRCVTNCPVIPNYGSCNCTLENIMIIQDNQSKPQCHVDCSNLGLVELPQRLPD. LRR repeat units follow at residues 417–438, 443–464, and 468–489; these read NTFM…FHTN, NINR…EGTK, and TFQR…FLNN. The LRRCT domain maps to 505–554; that stretch reads NKLQCDCNSAKTLQNWLKERSSDIPDYMEIRCRNMPQRVIELQEAKLCQS.

Functionally, has a role in the ecdysone induced cascade; probably indirect control of 'late' ecdysone genes. The polypeptide is Protein halfway (Drosophila melanogaster (Fruit fly)).